The sequence spans 565 residues: Probable alpha-L-arabinofuranosidase A (565 aa).

Residues 1-19 form the signal peptide; it reads MPLSAAIKSSLSVSVRADA. 7 N-linked (GlcNAc...) asparagine glycosylation sites follow: Asn-71, Asn-91, Asn-128, Asn-303, Asn-362, Asn-486, and Asn-501.

The protein belongs to the glycosyl hydrolase 51 family.

It is found in the secreted. The catalysed reaction is Hydrolysis of terminal non-reducing alpha-L-arabinofuranoside residues in alpha-L-arabinosides.. It participates in glycan metabolism; L-arabinan degradation. In terms of biological role, alpha-L-arabinofuranosidase involved in the degradation of arabinoxylan, a major component of plant hemicellulose. Acts only on small linear 1,5-alpha-linked L-arabinofuranosyl oligosaccharides. The polypeptide is Probable alpha-L-arabinofuranosidase A (abfA) (Emericella nidulans (strain FGSC A4 / ATCC 38163 / CBS 112.46 / NRRL 194 / M139) (Aspergillus nidulans)).